The following is a 142-amino-acid chain: Protein Turandot X (142 aa).

Residues 1-22 (MGLSIGSLLICVFLGIVPFATA) form the signal peptide.

This sequence belongs to the Turandot family.

Its subcellular location is the secreted. In terms of biological role, a humoral factor that may play a role in stress tolerance. This Drosophila melanogaster (Fruit fly) protein is Protein Turandot X.